Consider the following 61-residue polypeptide: Potassium channel toxin alpha-KTx 6.7 (61 aa).

An N-terminal signal peptide occupies residues 1–23 (MNAKFILLLLVVTTTMLLPDTQG). Intrachain disulfides connect Cys29–Cys50, Cys35–Cys55, Cys39–Cys57, and Cys45–Cys60. A Cysteine amide modification is found at Cys60.

This sequence belongs to the short scorpion toxin superfamily. Potassium channel inhibitor family. Alpha-KTx 06 subfamily. As to expression, expressed by the venom gland.

The protein resides in the secreted. Its function is as follows. Blocker of voltage-gated potassium channels. This chain is Potassium channel toxin alpha-KTx 6.7, found in Opistophthalmus carinatus (African yellow leg scorpion).